Here is a 488-residue protein sequence, read N- to C-terminus: Protein unzipped (488 aa).

A signal peptide spans 1 to 21; sequence MTSNSCLISLGLLLVLIQILA. The Extracellular portion of the chain corresponds to 22 to 465; it reads PAKAAEHSVF…DVALAGFGVN (444 aa). N35, N232, N317, and N374 each carry an N-linked (GlcNAc...) asparagine glycan. Over residues 380 to 400 the composition is skewed to low complexity; the sequence is TTTTTTTTSTSTTTHATTTST. The segment at 380 to 453 is disordered; sequence TTTTTTTTST…EAPENMSSDP (74 aa). N448 is a glycosylation site (N-linked (GlcNAc...) asparagine). The chain crosses the membrane as a helical span at residues 466-486; that stretch reads AAGSTFIAGSALLTLLLTIFL. The Cytoplasmic segment spans residues 487–488; sequence SL.

It localises to the membrane. Required for normal axon patterning during neurogenesis. This is Protein unzipped (uzip) from Drosophila melanogaster (Fruit fly).